The chain runs to 123 residues: uncharacterized protein (123 aa).

A disordered region spans residues 89–123 (GVGGRKLGSEGQSLSENSEQRSLMRWGCGGSSERR). The segment covering 98 to 109 (EGQSLSENSEQR) has biased composition (polar residues).

This is an uncharacterized protein from Encephalitozoon cuniculi (strain GB-M1) (Microsporidian parasite).